A 796-amino-acid polypeptide reads, in one-letter code: MLRGGRRGQLGWHSWAAGPGSLLAWLILASAGAAPCPDACCPHGSSGLRCTRDGALDSLHHLPGAENLTELYIENQQHLQHLELRDLRGLGELRNLTIVKSGLRFVAPDAFHFTPRLSRLNLSFNALESLSWKTVQGLSLQELVLSGNPLHCSCALRWLQRWEEEGLGGVPEQKLQCHGQGPLAHMPNASCGVPTLKVQVPNASVDVGDDVLLRCQVEGRGLEQAGWILTELEQSATVMKSGGLPSLGLTLANVTSDLNRKNVTCWAENDVGRAEVSVQVNVSFPASVQLHTAVEMHHWCIPFSVDGQPAPSLRWLFNGSVLNETSFIFTEFLEPAANETVRHGCLRLNQPTHVNNGNYTLLAANPFGQASASIMAAFMDNPFEFNPEDPIPVSFSPVDTNSTSGDPVEKKDETPFGVSVAVGLAVFACLFLSTLLLVLNKCGRRNKFGINRPAVLAPEDGLAMSLHFMTLGGSSLSPTEGKGSGLQGHIIENPQYFSDACVHHIKRRDIVLKWELGEGAFGKVFLAECHNLLPEQDKMLVAVKALKEASESARQDFQREAELLTMLQHQHIVRFFGVCTEGRPLLMVFEYMRHGDLNRFLRSHGPDAKLLAGGEDVAPGPLGLGQLLAVASQVAAGMVYLAGLHFVHRDLATRNCLVGQGLVVKIGDFGMSRDIYSTDYYRVGGRTMLPIRWMPPESILYRKFTTESDVWSFGVVLWEIFTYGKQPWYQLSNTEAIDCITQGRELERPRACPPEVYAIMRGCWQREPQQRHSIKDVHARLQALAQAPPVYLDVLG.

The signal sequence occupies residues 1–32; it reads MLRGGRRGQLGWHSWAAGPGSLLAWLILASAG. Residues 33 to 423 are Extracellular-facing; the sequence is AAPCPDACCP…TPFGVSVAVG (391 aa). Disulfide bonds link Cys36–Cys41 and Cys40–Cys50. Residues Asn67, Asn95, Asn121, Asn188, Asn202, Asn253, Asn262, Asn281, Asn318, Asn323, Asn338, Asn358, and Asn401 are each glycosylated (N-linked (GlcNAc...) asparagine). 2 LRR repeats span residues 90 to 113 and 116 to 137; these read LGEL…AFHF and RLSR…TVQG. Positions 148–193 constitute an LRRCT domain; it reads NPLHCSCALRWLQRWEEEGLGGVPEQKLQCHGQGPLAHMPNASCGV. A disulfide bridge connects residues Cys154 and Cys191. 2 consecutive Ig-like C2-type domains span residues 194 to 283 and 299 to 365; these read PTLK…VNVS and WCIP…LAAN. A disulfide bridge links Cys215 with Cys265. A disulfide bond links Cys300 and Cys345. Residues 424-439 traverse the membrane as a helical segment; it reads LAVFACLFLSTLLLVL. Residues 440–796 lie on the Cytoplasmic side of the membrane; the sequence is NKCGRRNKFG…APPVYLDVLG (357 aa). Positions 469–490 are interaction with SQSTM1; it reads MTLGGSSLSPTEGKGSGLQGHI. Phosphotyrosine; by autocatalysis is present on Tyr496. Positions 510–781 constitute a Protein kinase domain; sequence IVLKWELGEG…HSIKDVHARL (272 aa). Residue 516-524 participates in ATP binding; that stretch reads LGEGAFGKV. The DXXLL motif lies at 537 to 541; sequence DKMLV. Lys544 contributes to the ATP binding site. Positions 607–611 match the DXXLL motif; sequence DAKLL. Asp650 acts as the Proton acceptor in catalysis. Phosphotyrosine; by autocatalysis occurs at positions 676, 680, 681, and 791.

Belongs to the protein kinase superfamily. Tyr protein kinase family. Insulin receptor subfamily. As to quaternary structure, exists in a dynamic equilibrium between monomeric (low affinity) and dimeric (high affinity) structures. Homodimerization is induced by binding of a NGF dimer. Interacts with SQSTM1; bridges NTRK1 to NGFR. Forms a ternary complex with NGFR and KIDINS220; this complex is affected by the expression levels of KIDINS220 and an increase in KIDINS220 expression leads to a decreased association of NGFR and NTRK1. Interacts with SH2D1A; regulates NTRK1. Interacts (phosphorylated upon activation by NGF) with SHC1; mediates SHC1 phosphorylation and activation. Interacts (phosphorylated upon activation by NGF) with PLCG1; mediates PLCG1 phosphorylation and activation. Interacts (phosphorylated) with SH2B1 and SH2B2. Interacts with GRB2. Interacts with PIK3R1. Interacts with FRS2. Interacts with SORT1; may regulate NTRK1 anterograde axonal transport. Interacts with RAB7A. Found in a complex, at least composed of KIDINS220, MAGI2, NTRK1 and RAPGEF2; the complex is mainly formed at late endosomes in a nerve growth factor (NGF)-dependent manner. Interacts with RAPGEF2; the interaction is strengthened after NGF stimulation. Interacts with PTPRS. Interacts with USP36; USP36 does not deubiquitinate NTRK1. Interacts with GGA3. Interacts with TSPAN1; this interaction promotes NTRK1 stability. In terms of processing, ligand-mediated autophosphorylation. Interaction with SQSTM1 is phosphotyrosine-dependent. Autophosphorylation at Tyr-496 mediates interaction and phosphorylation of SHC1. N-glycosylated. Isoform TrkA-I and isoform TrkA-II are N-glycosylated. Post-translationally, ubiquitinated. Undergoes polyubiquitination upon activation; regulated by NGFR. Ubiquitination by NEDD4L leads to degradation. Ubiquitination regulates the internalization of the receptor. Isoform TrkA-I is found in most non-neuronal tissues. Isoform TrkA-II is primarily expressed in neuronal cells. TrkA-III is specifically expressed by pluripotent neural stem and neural crest progenitors.

It is found in the cell membrane. The protein localises to the early endosome membrane. The protein resides in the late endosome membrane. It localises to the recycling endosome membrane. The enzyme catalyses L-tyrosyl-[protein] + ATP = O-phospho-L-tyrosyl-[protein] + ADP + H(+). The pro-survival signaling effect of NTRK1 in neurons requires its endocytosis into signaling early endosomes and its retrograde axonal transport. This is regulated by different proteins including CFL1, RAC1 and SORT1. NTF3 is unable to induce this signaling probably due to the lability of the NTF3-NTRK1 complex in endosomes. SH2D1A inhibits the autophosphorylation of the receptor, and alters the recruitment and activation of downstream effectors and signaling cascades. Regulated by NGFR. Its function is as follows. Receptor tyrosine kinase involved in the development and the maturation of the central and peripheral nervous systems through regulation of proliferation, differentiation and survival of sympathetic and nervous neurons. High affinity receptor for NGF which is its primary ligand. Can also bind and be activated by NTF3/neurotrophin-3. However, NTF3 only supports axonal extension through NTRK1 but has no effect on neuron survival. Upon dimeric NGF ligand-binding, undergoes homodimerization, autophosphorylation and activation. Recruits, phosphorylates and/or activates several downstream effectors including SHC1, FRS2, SH2B1, SH2B2 and PLCG1 that regulate distinct overlapping signaling cascades driving cell survival and differentiation. Through SHC1 and FRS2 activates a GRB2-Ras-MAPK cascade that regulates cell differentiation and survival. Through PLCG1 controls NF-Kappa-B activation and the transcription of genes involved in cell survival. Through SHC1 and SH2B1 controls a Ras-PI3 kinase-AKT1 signaling cascade that is also regulating survival. In absence of ligand and activation, may promote cell death, making the survival of neurons dependent on trophic factors. In terms of biological role, resistant to NGF, it constitutively activates AKT1 and NF-kappa-B and is unable to activate the Ras-MAPK signaling cascade. Antagonizes the anti-proliferative NGF-NTRK1 signaling that promotes neuronal precursors differentiation. Isoform TrkA-III promotes angiogenesis and has oncogenic activity when overexpressed. The protein is High affinity nerve growth factor receptor (NTRK1) of Homo sapiens (Human).